We begin with the raw amino-acid sequence, 124 residues long: Replication restart protein PriB (124 aa).

In terms of domain architecture, SSB spans 12 to 112; it reads IDNCLTLTGI…LHTEQIEFID (101 aa).

Belongs to the PriB family. As to quaternary structure, homodimer. Interacts with PriA and DnaT. Component of the replication restart primosome. Primosome assembly occurs via a 'hand-off' mechanism. PriA binds to replication forks, subsequently PriB then DnaT bind; DnaT then displaces ssDNA to generate the helicase loading substrate.

In terms of biological role, involved in the restart of stalled replication forks, which reloads the replicative helicase on sites other than the origin of replication; the PriA-PriB pathway is the major replication restart pathway. During primosome assembly it facilitates complex formation between PriA and DnaT on DNA; stabilizes PriA on DNA. Stimulates the DNA unwinding activity of PriA helicase. The polypeptide is Replication restart protein PriB (Haemophilus ducreyi (strain 35000HP / ATCC 700724)).